A 208-amino-acid polypeptide reads, in one-letter code: Type 4 adapter protein LvgA (208 aa).

In terms of assembly, the T4BSS is a complex nanomachine composed of several subcomplexes. This subunit is part of the Type IV Coupling Complex (T4CC), a subcomplex composed of the DotLMNYZ core and the IcmSW-LvgA adapter subunits, linked by the C-terminal tail of DotL. Interacts with DotL, IcmS and IcmW. Interacts with various effector proteins, including VpdB, SetA, PieA and SidH.

The protein localises to the cytoplasm. Its function is as follows. Component of the Dot/Icm type IVB secretion system (T4BSS), which is used to inject bacterial effector proteins into eukaryotic host cells. Part of a subcomplex which recruits effector proteins and delivers them to the core transmembrane subcomplex. Is a critical subunit for binding a subset of effector proteins. Recognizes more than one type of binding motif. May be a critical factor that confers host specificity. This is Type 4 adapter protein LvgA from Legionella pneumophila subsp. pneumophila (strain Philadelphia 1 / ATCC 33152 / DSM 7513).